Reading from the N-terminus, the 403-residue chain is N-isopropylammelide isopropyl amidohydrolase (403 aa).

Residues H60, H62, and H217 each contribute to the Zn(2+) site. The active-site Proton donor/acceptor is H249. Residue D303 coordinates Zn(2+).

This sequence belongs to the metallo-dependent hydrolases superfamily. N-acyl-D-amino-acid deacylase family. Homotetramer. Requires Zn(2+) as cofactor.

The protein localises to the cytoplasm. The catalysed reaction is N-isopropylammelide + H2O + H(+) = isopropylamine + cyanurate. The protein operates within xenobiotic degradation; atrazine degradation; cyanurate from atrazine: step 3/3. Inhibited by N-ethylammeline, N-hydroxyethylammeline, N-isopropylammeline, ammeline and 2-amino-4hydroxy-1,3,5-s-triazine. In terms of biological role, transforms N-isopropylammelide to cyanuric acid and isopropylamine. The protein is N-isopropylammelide isopropyl amidohydrolase (atzC) of Pseudomonas sp. (strain ADP).